Consider the following 378-residue polypeptide: Zinc finger protein DPF3 (378 aa).

Residue lysine 99 forms a Glycyl lysine isopeptide (Lys-Gly) (interchain with G-Cter in SUMO2) linkage. The tract at residues valine 145 to aspartate 193 is disordered. A compositionally biased stretch (acidic residues) spans asparagine 148–glutamate 163. Residues arginine 168 to histidine 186 show a composition bias toward basic residues. The C2H2-type zinc finger occupies tyrosine 198–histidine 221. A disordered region spans residues glutamate 225 to glycine 254. 2 PHD-type zinc fingers span residues asparagine 259–cysteine 319 and cysteine 316–leucine 366. The interaction with HDGFL2 stretch occupies residues lysine 317–leucine 332. Glycine 323 is subject to Phosphoserine.

This sequence belongs to the requiem/DPF family. In terms of assembly, component of the BAF complex, which includes at least actin (ACTB), ARID1A, ARID1B/BAF250, SMARCA2, SMARCA4/BRG1/BAF190A, ACTL6A/BAF53, ACTL6B/BAF53B, SMARCE1/BAF57, SMARCC1/BAF155, SMARCC2/BAF170, SMARCB1/SNF5/INI1, and one or more of SMARCD1/BAF60A, SMARCD2/BAF60B, or SMARCD3/BAF60C. In muscle cells, the BAF complex also contains DPF3. Interacts with acetylated histones H3 and H4. Component of neuron-specific chromatin remodeling complex (nBAF complex) composed of at least, ARID1A/BAF250A or ARID1B/BAF250B, SMARCD1/BAF60A, SMARCD3/BAF60C, SMARCA2/BRM/BAF190B, SMARCA4/BRG1/BAF190A, SMARCB1/BAF47, SMARCC1/BAF155, SMARCE1/BAF57, SMARCC2/BAF170, DPF1/BAF45B, DPF3/BAF45C, ACTL6B/BAF53B and actin. As to quaternary structure, interacts with HDGFL2, SMARCA4/BRG1/BAF190A, SMARCC1/BAF155 and SMARCD1/BAF60A. Post-translationally, phosphorylation at Ser-323 enhances its interaction with HDGFL2.

It is found in the nucleus. Belongs to the neuron-specific chromatin remodeling complex (nBAF complex). During neural development a switch from a stem/progenitor to a post-mitotic chromatin remodeling mechanism occurs as neurons exit the cell cycle and become committed to their adult state. The transition from proliferating neural stem/progenitor cells to post-mitotic neurons requires a switch in subunit composition of the npBAF and nBAF complexes. As neural progenitors exit mitosis and differentiate into neurons, npBAF complexes which contain ACTL6A/BAF53A and PHF10/BAF45A, are exchanged for homologous alternative ACTL6B/BAF53B and DPF1/BAF45B or DPF3/BAF45C subunits in neuron-specific complexes (nBAF). The npBAF complex is essential for the self-renewal/proliferative capacity of the multipotent neural stem cells. The nBAF complex along with CREST plays a role regulating the activity of genes essential for dendrite growth. Muscle-specific component of the BAF complex, a multiprotein complex involved in transcriptional activation and repression of select genes by chromatin remodeling (alteration of DNA-nucleosome topology). Specifically binds acetylated lysines on histone 3 and 4 (H3K14ac, H3K9ac, H4K5ac, H4K8ac, H4K12ac, H4K16ac). In the complex, it acts as a tissue-specific anchor between histone acetylations and methylations and chromatin remodeling. It thereby probably plays an essential role in heart and skeletal muscle development. Functionally, acts as a regulator of myogenesis in cooperation with HDGFL2. Mediates the interaction of HDGFL2 with the BAF complex. HDGFL2-DPF3a activate myogenic genes by increasing chromatin accessibility through recruitment of SMARCA4/BRG1/BAF190A (ATPase subunit of the BAF complex) to myogenic gene promoters. The polypeptide is Zinc finger protein DPF3 (DPF3) (Homo sapiens (Human)).